The sequence spans 236 residues: Phosphoribosylaminoimidazole-succinocarboxamide synthase (236 aa).

The protein belongs to the SAICAR synthetase family.

It carries out the reaction 5-amino-1-(5-phospho-D-ribosyl)imidazole-4-carboxylate + L-aspartate + ATP = (2S)-2-[5-amino-1-(5-phospho-beta-D-ribosyl)imidazole-4-carboxamido]succinate + ADP + phosphate + 2 H(+). It functions in the pathway purine metabolism; IMP biosynthesis via de novo pathway; 5-amino-1-(5-phospho-D-ribosyl)imidazole-4-carboxamide from 5-amino-1-(5-phospho-D-ribosyl)imidazole-4-carboxylate: step 1/2. The chain is Phosphoribosylaminoimidazole-succinocarboxamide synthase from Rickettsia africae (strain ESF-5).